A 400-amino-acid polypeptide reads, in one-letter code: Enoyl-[acyl-carrier-protein] reductase [NADH] (400 aa).

NAD(+) is bound by residues 48–53, 74–75, 111–112, and 139–140; these read GSSSGY, FE, DA, and LA. Tyr225 serves as a coordination point for substrate. Catalysis depends on Tyr235, which acts as the Proton donor. NAD(+)-binding positions include Lys244 and 273–275; that span reads VVT.

This sequence belongs to the TER reductase family. As to quaternary structure, monomer.

It carries out the reaction a 2,3-saturated acyl-[ACP] + NAD(+) = a (2E)-enoyl-[ACP] + NADH + H(+). It participates in lipid metabolism; fatty acid biosynthesis. Its function is as follows. Involved in the final reduction of the elongation cycle of fatty acid synthesis (FAS II). Catalyzes the reduction of a carbon-carbon double bond in an enoyl moiety that is covalently linked to an acyl carrier protein (ACP). The protein is Enoyl-[acyl-carrier-protein] reductase [NADH] of Shewanella loihica (strain ATCC BAA-1088 / PV-4).